A 150-amino-acid polypeptide reads, in one-letter code: MKVVFLEDVKGRGKKGEIKEVPDGYANNFLIKNKKAEPATGKNLGAVKGRQKAEEKAAAEALAEAEQLKAKMADEKFVVEVKGKSGADGRLFGAISTKQIVVALAAQKQIKLDKRKLLLNQPIHALGYTNVPVKLHRDVVANLRVHVSEG.

Belongs to the bacterial ribosomal protein bL9 family.

Functionally, binds to the 23S rRNA. The polypeptide is Large ribosomal subunit protein bL9 (Leuconostoc citreum (strain KM20)).